A 616-amino-acid chain; its full sequence is Chaperone protein HscA homolog (616 aa).

Belongs to the heat shock protein 70 family.

Its function is as follows. Chaperone involved in the maturation of iron-sulfur cluster-containing proteins. Has a low intrinsic ATPase activity which is markedly stimulated by HscB. The protein is Chaperone protein HscA homolog of Histophilus somni (strain 129Pt) (Haemophilus somnus).